We begin with the raw amino-acid sequence, 123 residues long: Large ribosomal subunit protein uL22 (123 aa).

This sequence belongs to the universal ribosomal protein uL22 family. In terms of assembly, part of the 50S ribosomal subunit.

In terms of biological role, this protein binds specifically to 23S rRNA; its binding is stimulated by other ribosomal proteins, e.g. L4, L17, and L20. It is important during the early stages of 50S assembly. It makes multiple contacts with different domains of the 23S rRNA in the assembled 50S subunit and ribosome. The globular domain of the protein is located near the polypeptide exit tunnel on the outside of the subunit, while an extended beta-hairpin is found that lines the wall of the exit tunnel in the center of the 70S ribosome. The sequence is that of Large ribosomal subunit protein uL22 from Synechococcus sp. (strain JA-3-3Ab) (Cyanobacteria bacterium Yellowstone A-Prime).